Consider the following 488-residue polypeptide: GTPase Der (488 aa).

The region spanning 3–166 is the EngA-type G 1 domain; that stretch reads PVVALVGRPN…YALAPYAEAL (164 aa). GTP contacts are provided by residues 9–16, 56–60, and 118–121; these read GRPNVGKS, DTGGI, and NKVD. The segment at 168-191 is disordered; the sequence is LNRDGDEDEDEEEREYSEEEAEAE. A compositionally biased stretch (acidic residues) spans 172–189; that stretch reads GDEDEDEEEREYSEEEAE. In terms of domain architecture, EngA-type G 2 spans 200 to 373; the sequence is IKMAIIGKPN…SVQEAYDSAT (174 aa). GTP-binding positions include 206–213, 253–257, and 318–321; these read GKPNVGKS, DTAGV, and NKWD. The KH-like domain occupies 374–458; that stretch reads RRVSTSMLTR…PIQIRFQDSA (85 aa).

Belongs to the TRAFAC class TrmE-Era-EngA-EngB-Septin-like GTPase superfamily. EngA (Der) GTPase family. As to quaternary structure, associates with the 50S ribosomal subunit.

Functionally, GTPase that plays an essential role in the late steps of ribosome biogenesis. The sequence is that of GTPase Der from Shewanella sediminis (strain HAW-EB3).